A 20-amino-acid chain; its full sequence is Brevinin-1SPd (20 aa).

A disulfide bridge connects residues Cys-14 and Cys-20.

As to expression, expressed by the skin glands.

The protein resides in the secreted. Functionally, antimicrobial peptide with activity against Gram-negative and Gram-positive bacteria (MIC=13 uM against E.coli, MIC=3 uM against S.aureus) and fungi (MIC=3 uM against C.albicans). Shows hemolytic activity on human erythrocytes (HC(50)=8 uM). In Lithobates septentrionalis (Mink frog), this protein is Brevinin-1SPd.